The chain runs to 339 residues: Methylcobamide:CoM methyltransferase MtaA (339 aa).

3 residues coordinate Zn(2+): His-237, Cys-239, and Cys-316.

This sequence belongs to the uroporphyrinogen decarboxylase family. MtbA/mtaA subfamily. The cofactor is Zn(2+).

It catalyses the reaction methyl-Co(III)-[methanol-specific corrinoid protein] + coenzyme M = Co(I)-[methanol-specific corrinoid protein] + methyl-coenzyme M + H(+). Functionally, methyltransferase involved in methanogenesis in the methanol pathway. Catalyzes the transfer of the methyl group from the methylated corrinoid protein MtaC to coenzyme M, forming the substrate for coenzyme-B sulfoethylthiotransferase. MtaC can be substituted by free cob(I)alamin in vitro. The protein is Methylcobamide:CoM methyltransferase MtaA (mtaA) of Methanosarcina barkeri.